The sequence spans 110 residues: MTTPHSIAESTDPEVFPANNRHLTVSYASSYPEYTRIPAITLKGQWLEDAGFTTGTQVDVRVMNGCIVLTAQQPQPEESELMQSLRQVSKLSARKQKQVQAFIDVMAGSK.

A SpoVT-AbrB domain is found at 29–74 (SSYPEYTRIPAITLKGQWLEDAGFTTGTQVDVRVMNGCIVLTAQQP).

It belongs to the SymE family.

Its subcellular location is the cytoplasm. Involved in the degradation and recycling of damaged RNA. It is itself a target for degradation by the ATP-dependent protease Lon. The sequence is that of Endoribonuclease SymE from Salmonella choleraesuis (strain SC-B67).